The chain runs to 433 residues: GTPase Obg (433 aa).

The 159-residue stretch at 1–159 (MGLTDYCECR…LHVSLEIKYL (159 aa)) folds into the Obg domain. Positions 160-329 (ANVGIVGFPN…LVAQVFALHQ (170 aa)) constitute an OBG-type G domain. Residues 166–173 (GFPNTGKS), 191–195 (FTTLV), 212–215 (DIPG), 282–285 (NKTD), and 310–312 (ISA) each bind GTP. Residues Ser-173 and Thr-193 each coordinate Mg(2+). Positions 355 to 433 (ASETDHDPLN…FAGQEFVIND (79 aa)) constitute an OCT domain.

Belongs to the TRAFAC class OBG-HflX-like GTPase superfamily. OBG GTPase family. Monomer. Mg(2+) serves as cofactor.

It localises to the cytoplasm. Functionally, an essential GTPase which binds GTP, GDP and possibly (p)ppGpp with moderate affinity, with high nucleotide exchange rates and a fairly low GTP hydrolysis rate. Plays a role in control of the cell cycle, stress response, ribosome biogenesis and in those bacteria that undergo differentiation, in morphogenesis control. In Mycoplasma pneumoniae (strain ATCC 29342 / M129 / Subtype 1) (Mycoplasmoides pneumoniae), this protein is GTPase Obg.